The sequence spans 512 residues: MNGQGCELGHSNGDIISQNQQKGWWTIGLINGQHKYMTAETFGFKLNANGASLKKKQLWTLEPSNTGESIIYLRSHLNKYLSVDQFGNVLCESDERDAGSRFQISISEDGSGRWALKNESRGYFLGGTPDKLVCTAKTPGASEFWTVHLAARPQVNLRSIGRKRFAHLSESQDEIHVDANIPWGEDTLFTLEFRAEEGGRYALHTCNNKYLNANGKLQVVCNEDCLFSAEYHGGHLALRDRQGQYLSPIGSKAVLKSRSSSVTRDELFSLEDSLPQASFIAGLNLRYVSVKQGVDVTANQDEVGENETFQLEYDWSAHRWALRTTQDRYWCLSAGGGIQATGNRRCADALFELIWHGDGSLSFRANNGKFLATKRSGHLFATSESIEEIAKFYFYLINRPILVLKCEQGFVGYRTPGNLKLECNKATYETILVERAQKGLVHLKAHSGKYWRIEGESISVDADAPSDGFFLELREPTRICIRSQQGKYLGATKNGAFKLLDDGTDSATQWEF.

This sequence belongs to the fascin family. In terms of assembly, interacts with Rab35, with stronger binding to the Rab35-GTP form compared to the Rab35-GDP form.

It localises to the cytoplasm. Its subcellular location is the cytoskeleton. Its function is as follows. Acts as an actin bundling protein. May have a role in the asymmetric organization and/or movement of cytoplasmic components. It has a role in somatic cells during the formation of adult bristles and hairs, and in the female germline during oogenesis. The chain is Protein singed (sn) from Drosophila melanogaster (Fruit fly).